The sequence spans 179 residues: MKVHEANQGLTLPGSVVAIGAFDGVHQGHQAVLRQAVERSRQLGVESVAYTIDPPPRCRFQGSRMLTTLQEKLDRFAVLGLNHAVVAHFDERYAARRVDAFIRELTALNPREVIVGQDFRFGRNREGDVALLRRHFPVRIVQTVCCADGQRISSTRIRELIERGEWEQSTVLLGWPLSS.

It belongs to the RibF family.

It carries out the reaction riboflavin + ATP = FMN + ADP + H(+). The catalysed reaction is FMN + ATP + H(+) = FAD + diphosphate. It functions in the pathway cofactor biosynthesis; FAD biosynthesis; FAD from FMN: step 1/1. It participates in cofactor biosynthesis; FMN biosynthesis; FMN from riboflavin (ATP route): step 1/1. Functionally, catalyzes the phosphorylation of riboflavin to FMN followed by the adenylation of FMN to FAD. This is Putative bifunctional riboflavin kinase/FMN adenylyltransferase (ribF) from Geobacillus thermodenitrificans (strain NG80-2).